We begin with the raw amino-acid sequence, 155 residues long: Endoribonuclease YbeY (155 aa).

The segment at 64 to 84 (SFPMDEMRAPGDDEDPPSGLL) is disordered. Zn(2+) contacts are provided by His-115, His-119, and His-125.

It belongs to the endoribonuclease YbeY family. Zn(2+) is required as a cofactor.

It localises to the cytoplasm. Single strand-specific metallo-endoribonuclease involved in late-stage 70S ribosome quality control and in maturation of the 3' terminus of the 16S rRNA. The polypeptide is Endoribonuclease YbeY (Cutibacterium acnes (strain DSM 16379 / KPA171202) (Propionibacterium acnes)).